We begin with the raw amino-acid sequence, 358 residues long: 3'(2'),5'-bisphosphate nucleotidase (358 aa).

D52 acts as the Proton acceptor in catalysis. Positions 78, 140, 142, and 143 each coordinate Mg(2+). The active-site Proton acceptor is T145. Residues T145, H239, S263, K266, R280, and D292 each contribute to the adenosine 3',5'-bisphosphate site. Positions 239, 263, 266, 280, and 292 each coordinate AMP. D292 contacts Mg(2+).

Belongs to the inositol monophosphatase superfamily. Mg(2+) serves as cofactor. In terms of tissue distribution, is constitutively transcribed in both roots and shoots.

The enzyme catalyses 3'-phosphoadenylyl sulfate + H2O = adenosine 5'-phosphosulfate + phosphate. It carries out the reaction adenosine 3',5'-bisphosphate + H2O = AMP + phosphate. It catalyses the reaction adenosine 2',5'-bisphosphate + H2O = AMP + phosphate. Its activity is regulated as follows. Inhibited by Ca(2+), Li(+), and Na(+) and activated by K(+). Its function is as follows. Phosphatase that converts adenosine 3'-phosphate 5'-phosphosulfate (PAPS) to adenosine 5'-phosphosulfate (APS) and 3'(2')-phosphoadenosine 5'-phosphate (PAP) to AMP. May regulate the flux of sulfur in the sulfur-activation pathway by converting PAPS to APS. Shows no activity on myo-inositol 1-phosphate, beta-glycerol phosphate, NADPH, NADP and 5'-AMP. This chain is 3'(2'),5'-bisphosphate nucleotidase, found in Oryza sativa (Rice).